The primary structure comprises 532 residues: MEVQRNFFIFAFLFVSFLLWQAWQSQMFLNKKTNEKIDPIFHFIDVKKNKKKIFIKNDVISLVVNMYGGDVEEASLLAYKDTLYSSRPFKLLETGSDFIYQAQSGLIGKDGPDSSINDSRPLYSANKNFFVLGPNEKELRVPIKWLSKNGVIYKKTFILKPNRYDVQIEYDVYNPSKESLNMNIFGQIKQTINLPKKRNVYSGNFALQTFRGAAYSSDDNKYEKYKFDMIANNKNLHIMTESGWIAMLQQYFAVAWIPDNLGKNTIYTSSLDHDTAVIGYKSPIINIPPNSRSIIKSKLWIGPEIQKEMKLVAPNLDLTVDYGWLWFLSQPLFKLLTILYSIIGNWGFSIILITFIMRGLTYPLTKAQYISMAKMRALQPKIQEIKEKFSKDKQRISQEMILLYKKEKINPLGGFLPIFIQMPIFLSLYYMLIGSVELRHAPFLLWIHDLSSQDPYYVLPVIMGLTMFFIQKISSTNHISDPLQKKIMNFMPVIFTAFFLWFPSGLVLYYIISNLVTIIQQKFILSNLEKNR.

5 consecutive transmembrane segments (helical) span residues 7 to 27 (FFIF…QSQM), 336 to 356 (LTIL…ITFI), 413 to 433 (GGFL…YMLI), 450 to 470 (LSSQ…MFFI), and 492 to 512 (PVIF…YYII).

It belongs to the OXA1/ALB3/YidC family. Type 1 subfamily. As to quaternary structure, interacts with the Sec translocase complex via SecD. Specifically interacts with transmembrane segments of nascent integral membrane proteins during membrane integration.

Its subcellular location is the cell membrane. In terms of biological role, required for the insertion and/or proper folding and/or complex formation of integral membrane proteins into the membrane. Involved in integration of membrane proteins that insert both dependently and independently of the Sec translocase complex, as well as at least some lipoproteins. Aids folding of multispanning membrane proteins. The chain is Membrane protein insertase YidC from Buchnera aphidicola subsp. Acyrthosiphon pisum (strain Tuc7).